The chain runs to 107 residues: Quaternary ammonium compound-resistance protein QacC (107 aa).

The Cytoplasmic segment spans residues 1 to 2; sequence MP. Residues 3–20 form a helical membrane-spanning segment; the sequence is YIYLIIAISTEVIGSAFL. The Extracellular portion of the chain corresponds to 21–29; that stretch reads KSSEGFSKF. Residues 30-47 traverse the membrane as a helical segment; sequence IPSLGTIISFGICFYFLS. Residues 48 to 56 are Cytoplasmic-facing; sequence KTMQHLPLN. Residues 57–75 traverse the membrane as a helical segment; that stretch reads ITYATWAGLGLVLTTVVSI. Residues 76–85 are Extracellular-facing; that stretch reads IIFKEQINLI. A helical transmembrane segment spans residues 86-103; the sequence is TIVSIVLIIVGVVSLNIF. Topologically, residues 104 to 107 are cytoplasmic; sequence GTSH.

The protein belongs to the drug/metabolite transporter (DMT) superfamily. Small multidrug resistance (SMR) (TC 2.A.7.1) family.

It localises to the cell membrane. Ethidium export is inhibited by N-ethylmaleimide (NEM). Multidrug exporter. Is implicated for the resistance to bacteriocidal quaternary ammonium compounds and ethidium bromide. The protein is Quaternary ammonium compound-resistance protein QacC of Staphylococcus aureus.